A 142-amino-acid chain; its full sequence is Putative regulator of rDNA transcription protein 16 (142 aa).

3 helical membrane-spanning segments follow: residues 19 to 39 (ILLTVLFGIGWATLDLPVMVA), 84 to 104 (FLLFIGLNTSPCVSETIAIFL), and 111 to 131 (SIFIATEYLFLILLPLRGLCH).

Its subcellular location is the membrane. In terms of biological role, identified in a screen for mutants with decreased levels of rDNA transcription. In Saccharomyces cerevisiae (strain ATCC 204508 / S288c) (Baker's yeast), this protein is Putative regulator of rDNA transcription protein 16 (RRT16).